Consider the following 93-residue polypeptide: UPF0367 protein ssl1972 (93 aa).

The protein belongs to the UPF0367 family.

The protein is UPF0367 protein ssl1972 of Synechocystis sp. (strain ATCC 27184 / PCC 6803 / Kazusa).